Consider the following 292-residue polypeptide: Acetylglutamate kinase (292 aa).

Substrate-binding positions include 64–65, Arg86, and Asn190; that span reads GG.

Belongs to the acetylglutamate kinase family. ArgB subfamily.

Its subcellular location is the cytoplasm. It carries out the reaction N-acetyl-L-glutamate + ATP = N-acetyl-L-glutamyl 5-phosphate + ADP. Its pathway is amino-acid biosynthesis; L-arginine biosynthesis; N(2)-acetyl-L-ornithine from L-glutamate: step 2/4. In terms of biological role, catalyzes the ATP-dependent phosphorylation of N-acetyl-L-glutamate. This is Acetylglutamate kinase from Pelobacter propionicus (strain DSM 2379 / NBRC 103807 / OttBd1).